The following is a 469-amino-acid chain: F-box only protein 3 (469 aa).

The region spanning 10 to 56 (PLTLESLPTDPLLLILSFLDYRDLINCCYVSRRLSQLSSHDPLWRRH) is the F-box domain. In terms of domain architecture, ApaG spans 278-408 (VATTGDITVS…FHMACPTFRV (131 aa)). The span at 419–449 (EYEEMEEEEEEEEEEDDDDSADMDESDDDEE) shows a compositional bias: acidic residues. The disordered stretch occupies residues 419 to 454 (EYEEMEEEEEEEEEEDDDDSADMDESDDDEEERQRR).

Part of a SCF (SKP1-cullin-F-box) protein ligase complex SCF(FBXO3) consisting of FBXO3, SKP1, CUL1 and RBX1. Interacts with PML, interaction is direct and takes place either alone or within the SCF complex.

The protein resides in the nucleus. The protein operates within protein modification; protein ubiquitination. Its function is as follows. Substrate recognition component of the SCF (SKP1-CUL1-F-box protein)-type E3 ubiquitin ligase complex, SCF(FBXO3), which mediates the ubiquitination and subsequent proteasomal degradation of target proteins. Mediates the ubiquitination of HIPK2 and probably that of EP300, leading to rapid degradation by the proteasome. In the presence of PML, HIPK2 ubiquitination still occurs, but degradation is prevented. PML, HIPK2 and FBXO3 may act synergically to activate p53/TP53-dependent transactivation. The SCF(FBXO3) also acts as a regulator of inflammation by mediating ubiquitination and degradation of FBXL2 in response to lipopolysaccharide (LPS). The SCF(FBXO3) complex specifically recognizes FBXL2 phosphorylated at 'Thr-404' and promotes its ubiquitination. The sequence is that of F-box only protein 3 (FBXO3) from Bos taurus (Bovine).